A 176-amino-acid polypeptide reads, in one-letter code: MAKQTLPYPPGFVEPTTGRVAVMVREYADSDLNGDAPAYWYSAQSEEWGLDPWRLVEGVDPHVGGGSFDVCFASGGTRTVGPLMTFFLSAAHAAQLIDAKGEELALQRATLAVIADGLGLPAKALRIEAKVEGRPAVFYDQDGATLCACAVDSDHWRQARATAATASAIDKARTNF.

The protein is Protein KleF (kleF) of Escherichia coli.